Consider the following 806-residue polypeptide: ATP-dependent zinc metalloprotease FTSH 11, chloroplastic/mitochondrial (806 aa).

The transit peptide at 1 to 63 (MSSSTLQASL…RFRPLPCSLR (63 aa)) directs the protein to the chloroplast and mitochondrion. A compositionally biased stretch (basic and acidic residues) spans 106–116 (FVGGEETKSGG). Residues 106-130 (FVGGEETKSGGEEAEVSNGVTEGKE) form a disordered region. A helical membrane pass occupies residues 301-321 (LVSTILFTVAVGLVWIMGAAA). 402–409 (GAPGTGKT) contributes to the ATP binding site. Residue His-620 coordinates Zn(2+). Glu-621 is an active-site residue. His-624 and Asp-698 together coordinate Zn(2+).

In the N-terminal section; belongs to the AAA ATPase family. The protein in the C-terminal section; belongs to the peptidase M41 family. As to quaternary structure, homooligomer. Zn(2+) is required as a cofactor.

It is found in the mitochondrion inner membrane. The protein localises to the plastid. The protein resides in the chloroplast thylakoid membrane. Its function is as follows. Probable ATP-dependent zinc metallopeptidase. Involved in the assembly and/or stability of the complexes I and V. Involved in thermotolerance but not in high light stress resistance or in the assembly/stability of the complexes I and V of the mitochondrial oxidative phosphorylation system. The sequence is that of ATP-dependent zinc metalloprotease FTSH 11, chloroplastic/mitochondrial (FTSH11) from Arabidopsis thaliana (Mouse-ear cress).